A 254-amino-acid chain; its full sequence is Hydrolase tropI (254 aa).

Catalysis depends on residues Cys141, Asp187, and His219.

The protein belongs to the dienelactone hydrolase family.

Its pathway is secondary metabolite biosynthesis. In terms of biological role, hydrolase; part of the gene cluster that mediates the biosynthesis of the tropolone class of fungal maleic anhydrides. The pathway begins with the synthesis of 3-methylorcinaldehyde by the non-reducing polyketide synthase (PKS) tropA. 3-methylorcinaldehyde is the substrate for the FAD-dependent monooxygenase tropB to yield a dearomatized hydroxycyclohexadione. The 2-oxoglutarate-dependent dioxygenase tropC then performs the oxidative ring expansion to provide the first tropolone metabolite stipitaldehyde. Trop D converts stipitaldehyde into stipitacetal which is in turn converted to stipitalide by the short-chain dehydrogenase/reductase tropE. The next steps involve tropF, tropG, tropH, tropI and tropJ to form successive tropolone maleic anhydrides including stipitaldehydic, stipitatonic and stipitatic acids. This chain is Hydrolase tropI, found in Talaromyces stipitatus (strain ATCC 10500 / CBS 375.48 / QM 6759 / NRRL 1006) (Penicillium stipitatum).